The chain runs to 430 residues: MGQSVVVLGAQWGDEGKGKIVDLLTEEIGAVVRFQGGHNAGHTLVINGKKTVLHLIPSGILRDDALCLIGNGVVISPAALIKEIGELESAGVEVRSRLKISPAAPLIMPYHIALDQAREKAAGGKAIGTTGRGIGPAYEDKVARRGIRIADLHYPAQLEELLRTALDYHNFVLTKYLGVEAVDFQKTFDEALAFGEYVQPMKSDVAGILHDLRKQGKRVLFEGAQGALLDIDHGTYPYVTSSNTTVGGALAGTGVGADAIDYVLGIAKAYATRVGGGPFPTELDDEVGQGIRDRGAEYGASTGRPRRCGWMDIVALKRAVAINGISGLCITKLDVLDGMEKLKVCIAYEYRGKRTEYAPLDAQGWEECTPVYLEFPGWTENTHGITEWDKLPVAARAYLRALEELAGCPISIVSTGPDRDHTMVLQDPFA.

Residues 13 to 19 (GDEGKGK) and 41 to 43 (GHT) contribute to the GTP site. Asp14 (proton acceptor) is an active-site residue. 2 residues coordinate Mg(2+): Asp14 and Gly41. Residues 14–17 (DEGK), 39–42 (NAGH), Thr130, Arg144, Gln225, Thr240, and Arg304 contribute to the IMP site. The active-site Proton donor is His42. Residue 300 to 306 (ASTGRPR) coordinates substrate. GTP-binding positions include Arg306, 332 to 334 (KLD), and 414 to 416 (STG).

The protein belongs to the adenylosuccinate synthetase family. As to quaternary structure, homodimer. Mg(2+) is required as a cofactor.

It is found in the cytoplasm. The enzyme catalyses IMP + L-aspartate + GTP = N(6)-(1,2-dicarboxyethyl)-AMP + GDP + phosphate + 2 H(+). The protein operates within purine metabolism; AMP biosynthesis via de novo pathway; AMP from IMP: step 1/2. Plays an important role in the de novo pathway of purine nucleotide biosynthesis. Catalyzes the first committed step in the biosynthesis of AMP from IMP. The chain is Adenylosuccinate synthetase from Xanthomonas campestris pv. campestris (strain 8004).